Consider the following 283-residue polypeptide: Elongation factor Ts (283 aa).

An involved in Mg(2+) ion dislocation from EF-Tu region spans residues Thr-80–Val-83.

The protein belongs to the EF-Ts family.

The protein resides in the cytoplasm. Associates with the EF-Tu.GDP complex and induces the exchange of GDP to GTP. It remains bound to the aminoacyl-tRNA.EF-Tu.GTP complex up to the GTP hydrolysis stage on the ribosome. The chain is Elongation factor Ts from Pectobacterium atrosepticum (strain SCRI 1043 / ATCC BAA-672) (Erwinia carotovora subsp. atroseptica).